The sequence spans 348 residues: Probable dual-specificity RNA methyltransferase RlmN (348 aa).

Catalysis depends on Glu93, which acts as the Proton acceptor. A Radical SAM core domain is found at 99 to 323; sequence TEKRLTACLS…QTRLSNSGIN (225 aa). A disulfide bridge connects residues Cys106 and Cys338. The [4Fe-4S] cluster site is built by Cys113, Cys117, and Cys120. Residues 160 to 161, Ser190, 219 to 221, and Asn295 each bind S-adenosyl-L-methionine; these read GE and SLH. Cys338 serves as the catalytic S-methylcysteine intermediate.

This sequence belongs to the radical SAM superfamily. RlmN family. [4Fe-4S] cluster serves as cofactor.

It localises to the cytoplasm. The catalysed reaction is adenosine(2503) in 23S rRNA + 2 reduced [2Fe-2S]-[ferredoxin] + 2 S-adenosyl-L-methionine = 2-methyladenosine(2503) in 23S rRNA + 5'-deoxyadenosine + L-methionine + 2 oxidized [2Fe-2S]-[ferredoxin] + S-adenosyl-L-homocysteine. It catalyses the reaction adenosine(37) in tRNA + 2 reduced [2Fe-2S]-[ferredoxin] + 2 S-adenosyl-L-methionine = 2-methyladenosine(37) in tRNA + 5'-deoxyadenosine + L-methionine + 2 oxidized [2Fe-2S]-[ferredoxin] + S-adenosyl-L-homocysteine. Functionally, specifically methylates position 2 of adenine 2503 in 23S rRNA and position 2 of adenine 37 in tRNAs. The protein is Probable dual-specificity RNA methyltransferase RlmN of Prochlorococcus marinus subsp. pastoris (strain CCMP1986 / NIES-2087 / MED4).